An 888-amino-acid polypeptide reads, in one-letter code: Transmembrane channel-like protein 2 (888 aa).

The tract at residues 1 to 128 (MSPQLKSLDE…SLGSSVSTGD (128 aa)) is disordered. Topologically, residues 1–228 (MSPQLKSLDE…KIKDIESHFG (228 aa)) are cytoplasmic. Composition is skewed to basic and acidic residues over residues 7-16 (SLDEEGDKSA), 32-44 (DGHR…KDPA), and 87-110 (RTSL…EAGK). The span at 117–128 (STSLGSSVSTGD) shows a compositional bias: polar residues. The helical transmembrane segment at 229 to 266 (SSVASYFIFLRWMYGVNLVLFGLIFGLVIIPEVLMGMP) threads the bilayer. At 267–317 (YGSIPRKTVPRAEEERAMDFSVLWDFEGYIKYSALFYGYYNNQRTIGWLRY) the chain is on the extracellular side. Residues 318 to 350 (RLPMAYFMVGVSVFGYSLMIVIRSMASNTQGST) form a helical membrane-spanning segment. Residues 351-406 (SEGDSDSFTFSFKMFTSWDYLIGNSETADNKYVSITTSFKESIVDEQESNKEGNIH) lie on the Cytoplasmic side of the membrane. Residues 407 to 437 (LTRFLRVLANFLILCCLCGSGYLIYFVVKRS) form a helical membrane-spanning segment. At 438 to 447 (QEFSKMQNVS) the chain is on the extracellular side. A helical transmembrane segment spans residues 448–475 (WYERNEVEIVMSLLGMFCPPLFETIAAL). Residues 476 to 479 (ENYH) lie on the Cytoplasmic side of the membrane. Residues 480-514 (PRTGLKWQLGRIFALFLGNLYTFLLALMDDVHLKL) form a helical membrane-spanning segment. At 515 to 556 (SNEEKIKNITHWTLFNYYNSSGGNESVPRPPPHPADVPRGSC) the chain is on the extracellular side. The helical transmembrane segment at 557–594 (WETAVGIEFMRLTVSDMLVTYLTILVGDFLRACFVRFM) threads the bilayer. The Cytoplasmic segment spans residues 595 to 613 (NHCWCWDLEAGFPSYAEFD). Residues 614–634 (ISGNVLGLIFNQGMIWMGSFY) form a helical membrane-spanning segment. Residues 635–637 (APG) lie on the Extracellular side of the membrane. The chain crosses the membrane as a helical span at residues 638 to 660 (LVGINVLRLLTSMYFQCWAVMSS). The Cytoplasmic portion of the chain corresponds to 661 to 674 (NVPHERVFKASRSN). The chain crosses the membrane as a helical span at residues 675-698 (NFYMGLLLLVLFLSLLPVAYTVMS). Over 699 to 741 (LPPSFDCGPFSGKNRMYDVLHETIENDFPKFLGKIFAFLANPG) the chain is Extracellular. The chain crosses the membrane as a helical span at residues 742-775 (LIIPAILLMFLAIYYLNSVSKSLSRANAQLRKKI). Over 776–888 (QALREVEKNH…SGKRTQRPHN (113 aa)) the chain is Cytoplasmic. Residues 813-888 (LTKEEPTSHS…SGKRTQRPHN (76 aa)) are disordered. Polar residues-rich tracts occupy residues 836-851 (PHTS…STSW) and 866-881 (GQPQ…PSGK).

The protein belongs to the TMC family. In terms of assembly, forms the MET channel composed of TMC dimer (TMC1 or TMC2), TMIE, TOMT, CIB (CIB2 or CIB3), LHFPL5 and PDH15. The interaction of TMC1 and TMC2 with TOMT is required for the transportation of TMC1/2 into the stereocilia of hair cells. Interacts (via N-terminus) with both isoforms CD1 and CD3 of PCDH15. Can form a heterodimer with TMC1, TMC5 or TMC7. In terms of tissue distribution, inner ear and testis. Expressed in cochlear inner and outer hair cells and vestibular organ hair cells.

It localises to the cell membrane. The catalysed reaction is Ca(2+)(in) = Ca(2+)(out). Pore-forming subunit of the mechanotransducer (MET) non-selective cation channel complex located at the tips of stereocilia of cochlear hair cells and that mediates sensory transduction in the auditory system. The MET complex is composed of two dimeric pore-forming ion-conducting transmembrane TMC (TMC1 or TMC2) subunits, several auxiliary proteins including LHFPL5, TMIE, CIB2/3 and TOMT, the tip-link PCDH15, and possibly the PIEZO subunits. MET channel is activated by tension in the tip-link extending from the side wall of one stereocilium to the tip of the adjacent shorter stereocilium, where the channel is located. TMC2 MET channel is highly permeable to calcium and likely transports monovalent cations. Also involved in vestibular hair cell transduction current of the mammalian inner ear. This is Transmembrane channel-like protein 2 from Mus musculus (Mouse).